Reading from the N-terminus, the 330-residue chain is Uracil-DNA glycosylase, mitochondrial (330 aa).

The N-terminal 49 residues, 1 to 49, are a transit peptide targeting the mitochondrion; that stretch reads MASSTPKTLMDFFQPAKRLKASPSSSSFPAVSVAGGSRDLGSVANSPPR. The active-site Proton acceptor is the D173.

This sequence belongs to the uracil-DNA glycosylase (UDG) superfamily. UNG family.

The protein localises to the mitochondrion. The catalysed reaction is Hydrolyzes single-stranded DNA or mismatched double-stranded DNA and polynucleotides, releasing free uracil.. With respect to regulation, inhidited by the small peptide uracil-DNA-glycosylase inhibitor (Ugi). Functionally, excises uracil residues from the DNA which can arise as a result of misincorporation of dUMP residues by DNA polymerase or due to deamination of cytosine. More active on U:G, U:T and U:C mispairs than on U:A pairs. Highly specific for uracil and no activity with 5-substituted uracil or cytosine derivatives. Required for initiation of base excision repair (BER) of uracil. In Arabidopsis thaliana (Mouse-ear cress), this protein is Uracil-DNA glycosylase, mitochondrial.